Consider the following 523-residue polypeptide: Glutamate--cysteine ligase, chloroplastic (523 aa).

C187 and C407 form a disulfide bridge.

Belongs to the carboxylate-amine ligase family. Glutamate--cysteine ligase type 2 subfamily. Homodimer or monomer when oxidized or reduced, respectively. In terms of processing, the Cys-187-Cys-407 disulfide bridge is known to modulate the enzyme activity according to the redox status. The oxidized form constitutes the active enzyme.

Its subcellular location is the plastid. It localises to the chloroplast. It catalyses the reaction L-cysteine + L-glutamate + ATP = gamma-L-glutamyl-L-cysteine + ADP + phosphate + H(+). Its pathway is sulfur metabolism; glutathione biosynthesis; glutathione from L-cysteine and L-glutamate: step 1/2. This Solanum lycopersicum (Tomato) protein is Glutamate--cysteine ligase, chloroplastic (GSH1).